A 271-amino-acid chain; its full sequence is Glutamate racemase (271 aa).

Residues 12–13 (DS) and 44–45 (YG) contribute to the substrate site. The active-site Proton donor/acceptor is Cys75. Residue 76-77 (NS) coordinates substrate. Cys185 (proton donor/acceptor) is an active-site residue. Residue 186–187 (TH) coordinates substrate.

It belongs to the aspartate/glutamate racemases family.

It catalyses the reaction L-glutamate = D-glutamate. It participates in cell wall biogenesis; peptidoglycan biosynthesis. In terms of biological role, provides the (R)-glutamate required for cell wall biosynthesis. This Mycobacterium bovis (strain ATCC BAA-935 / AF2122/97) protein is Glutamate racemase.